Reading from the N-terminus, the 414-residue chain is 2-epi-5-epi-valiolone synthase (414 aa).

NAD(+) is bound by residues Asp70, 101-104 (ESAK), 134-138 (GVLTD), 158-159 (TT), Lys171, Lys180, and 198-201 (FLAT). Residue Lys171 is part of the active site. Residues Glu213, His284, and His300 each contribute to the Zn(2+) site.

It belongs to the sugar phosphate cyclases superfamily. EEVS family. It depends on NAD(+) as a cofactor. Zn(2+) serves as cofactor.

It catalyses the reaction D-sedoheptulose 7-phosphate = 2-epi-5-epi-valiolone + phosphate. Its pathway is antibiotic biosynthesis. In terms of biological role, catalyzes the cyclization of D-sedoheptulose 7-phosphate to 2-epi-5-epi-valiolone. Involved in validamycin biosynthesis. This chain is 2-epi-5-epi-valiolone synthase, found in Streptomyces hygroscopicus subsp. jinggangensis (strain 5008).